The following is a 1863-amino-acid chain: Breast cancer type 1 susceptibility protein homolog (1863 aa).

Position 1 is an N-acetylmethionine (methionine 1). Residues 24–65 (CPICLELIKEPVSTKCDHIFCKFCMLKLLNQKKGPSQCPLCK) form an RING-type zinc finger. A Glycyl lysine isopeptide (Lys-Gly) (interchain with G-Cter in SUMO2) cross-link involves residue lysine 109. Serine 114 bears the Phosphoserine mark. Positions 230–267 (ETDVTNTEHHQPSNNDLNTTEKRATERHPEKYQGSSVS) are disordered. Over residues 248–260 (TTEKRATERHPEK) the composition is skewed to basic and acidic residues. Lysine 301 participates in a covalent cross-link: Glycyl lysine isopeptide (Lys-Gly) (interchain with G-Cter in SUMO2). Residues 306–338 (NKSKQPGLARSQHNRWAGSKETCNDRRTPSTEK) form a disordered region. Residues 327-338 (TCNDRRTPSTEK) show a composition bias toward basic and acidic residues. Lysine 339 participates in a covalent cross-link: Glycyl lysine isopeptide (Lys-Gly) (interchain with G-Cter in SUMO2). Serine 395, serine 398, serine 423, and serine 434 each carry phosphoserine. Glycyl lysine isopeptide (Lys-Gly) (interchain with G-Cter in SUMO2) cross-links involve residues lysine 443, lysine 459, and lysine 519. Serine 551 is subject to Phosphoserine. Glycyl lysine isopeptide (Lys-Gly) (interchain with G-Cter in SUMO2) cross-links involve residues lysine 583 and lysine 654. Residues 650 to 739 (IKKKKYNQMP…EKEEKLETVK (90 aa)) are disordered. 3 positions are modified to phosphoserine: serine 694, serine 708, and serine 725. Residues 705–716 (APGSFTNCSNTS) show a composition bias toward polar residues. Residues 727-737 (PREEKEEKLET) are compositionally biased toward basic and acidic residues. Glycyl lysine isopeptide (Lys-Gly) (interchain with G-Cter in SUMO2) cross-links involve residues lysine 734 and lysine 739. A phosphoserine mark is found at serine 753 and serine 840. Positions 896-915 (SPKVTFEREQKEQNQGKNES) are disordered. Residues 900–909 (TFEREQKEQN) are compositionally biased toward basic and acidic residues. Residues lysine 918 and lysine 987 each participate in a glycyl lysine isopeptide (Lys-Gly) (interchain with G-Cter in SUMO2) cross-link. A Phosphoserine; by CHEK2 modification is found at serine 988. A Phosphoserine modification is found at serine 1009. Residue lysine 1079 forms a Glycyl lysine isopeptide (Lys-Gly) (interchain with G-Cter in SUMO2) linkage. Phosphoserine is present on residues serine 1143, serine 1189, serine 1191, serine 1211, serine 1217, serine 1218, serine 1280, serine 1328, serine 1336, serine 1342, and serine 1387. A disordered region spans residues 1181-1216 (VQRGELSRSPSPFTHTHLAQGYRRGAKKLESSEENL). Residues 1322–1395 (KQMRHQSESQ…SSQSDILTTQ (74 aa)) are disordered. Polar residues predominate over residues 1373-1395 (ESETSVSEDCSGLSSQSDILTTQ). Threonine 1394 carries the post-translational modification Phosphothreonine. The interaction with PALB2 stretch occupies residues 1397 to 1424 (RDTMQDNLIKLQQEMAELEAVLEQHGSQ). 4 positions are modified to phosphoserine: serine 1423, serine 1457, serine 1524, and serine 1542. The interval 1440–1505 (EDLQNPEQST…SSPSKCPSLD (66 aa)) is disordered. Residues 1444–1470 (NPEQSTSEKAVLTSQKSSEYPISQNPE) show a composition bias toward polar residues. The tract at residues 1565-1642 (ESGISLFSDD…SREKPELTAS (78 aa)) is disordered. The segment covering 1610-1624 (SAQSPAAAHTTNTAG) has biased composition (polar residues). BRCT domains follow at residues 1642 to 1736 (STER…DFEV) and 1756 to 1855 (QDRK…TYLI).

In terms of assembly, heterodimer with BARD1. Part of the BRCA1-associated genome surveillance complex (BASC), which contains BRCA1, MSH2, MSH6, MLH1, ATM, BLM, PMS2 and the MRE11-RAD50-NBN protein (MRN) complex. This association could be a dynamic process changing throughout the cell cycle and within subnuclear domains. Component of the BRCA1-A complex, at least composed of BRCA1, BARD1, UIMC1/RAP80, ABRAXAS1, BRCC3/BRCC36, BABAM2 and BABAM1/NBA1. Interacts (via the BRCT domains) with ABRAXAS1 (phosphorylated form); this is important for recruitment to sites of DNA damage. Can form a heterotetramer with two molecules of ABRAXAS1 (phosphorylated form). Component of the BRCA1-RBBP8 complex. Interacts (via the BRCT domains) with RBBP8 ('Ser-327' phosphorylated form); the interaction ubiquitinates RBBP8, regulates CHEK1 activation, and involves RBBP8 in BRCA1-dependent G2/M checkpoint control on DNA damage. Associates with RNA polymerase II holoenzyme. Interacts with SMC1A, NELFB, DCLRE1C, CLSPN. CHEK1, CHEK2, BAP1, BRCC3, UBXN1 and PCLAF. Interacts (via BRCT domains) with BRIP1 (phosphorylated form). Interacts with FANCD2 (ubiquitinated form). Interacts with H2AX (phosphorylated on 'Ser-140'). Interacts (via the BRCT domains) with ACACA (phosphorylated form); the interaction prevents dephosphorylation of ACACA. Part of a BRCA complex containing BRCA1, BRCA2 and PALB2. Interacts directly with PALB2; the interaction is essential for its function in HRR. Interacts directly with BRCA2; the interaction occurs only in the presence of PALB2 which serves as the bridging protein. Interacts (via the BRCT domains) with LMO4; the interaction represses the transcriptional activity of BRCA1. Interacts (via the BRCT domains) with CCAR2 (via N-terminus); the interaction represses the transcriptional activator activity of BRCA1. Interacts with EXD2. Interacts (via C-terminus) with DHX9; this interaction is direct and links BRCA1 to the RNA polymerase II holoenzyme. Interacts with DNA helicase ZGRF1; the interaction is increased following DNA damage induction. Phosphorylated in response to IR, UV, and various stimuli that cause checkpoint activation, probably by ATM or ATR. Phosphorylation at Ser-988 by CHEK2 regulates mitotic spindle assembly. Phosphorylation by AURKA regulates centrosomal microtubule nucleation. In terms of processing, autoubiquitinated, undergoes 'Lys-6'-linked polyubiquitination. 'Lys-6'-linked polyubiquitination does not promote degradation.

It is found in the nucleus. The protein resides in the chromosome. Its subcellular location is the cytoplasm. The enzyme catalyses S-ubiquitinyl-[E2 ubiquitin-conjugating enzyme]-L-cysteine + [acceptor protein]-L-lysine = [E2 ubiquitin-conjugating enzyme]-L-cysteine + N(6)-ubiquitinyl-[acceptor protein]-L-lysine.. Its function is as follows. E3 ubiquitin-protein ligase that specifically mediates the formation of 'Lys-6'-linked polyubiquitin chains and plays a central role in DNA repair by facilitating cellular responses to DNA damage. It is unclear whether it also mediates the formation of other types of polyubiquitin chains. The BRCA1-BARD1 heterodimer coordinates a diverse range of cellular pathways such as DNA damage repair, ubiquitination and transcriptional regulation to maintain genomic stability. Regulates centrosomal microtubule nucleation. Required for appropriate cell cycle arrests after ionizing irradiation in both the S-phase and the G2 phase of the cell cycle. Required for FANCD2 targeting to sites of DNA damage. Inhibits lipid synthesis by binding to inactive phosphorylated ACACA and preventing its dephosphorylation. Contributes to homologous recombination repair (HRR) via its direct interaction with PALB2, fine-tunes recombinational repair partly through its modulatory role in the PALB2-dependent loading of BRCA2-RAD51 repair machinery at DNA breaks. Component of the BRCA1-RBBP8 complex which regulates CHEK1 activation and controls cell cycle G2/M checkpoints on DNA damage via BRCA1-mediated ubiquitination of RBBP8. Acts as a transcriptional activator. In Pan troglodytes (Chimpanzee), this protein is Breast cancer type 1 susceptibility protein homolog (BRCA1).